We begin with the raw amino-acid sequence, 226 residues long: 7-cyano-7-deazaguanine synthase (226 aa).

10 to 20 (LSGGLDSATAA) is an ATP binding site. The Zn(2+) site is built by Cys-191, Cys-199, Cys-202, and Cys-205.

Belongs to the QueC family. Requires Zn(2+) as cofactor.

It catalyses the reaction 7-carboxy-7-deazaguanine + NH4(+) + ATP = 7-cyano-7-deazaguanine + ADP + phosphate + H2O + H(+). It participates in purine metabolism; 7-cyano-7-deazaguanine biosynthesis. Functionally, catalyzes the ATP-dependent conversion of 7-carboxy-7-deazaguanine (CDG) to 7-cyano-7-deazaguanine (preQ(0)). The chain is 7-cyano-7-deazaguanine synthase from Synechococcus sp. (strain CC9311).